The chain runs to 170 residues: Putative apoptosis inhibitor ORF87 (170 aa).

BIR repeat units lie at residues 22 to 92 and 104 to 169; these read RIKS…PVGK and RLKS…KLSS.

In terms of biological role, may act as an apoptosis inhibitor. In Ostreid herpesvirus 1 (isolate France) (OsHV-1), this protein is Putative apoptosis inhibitor ORF87.